Here is a 216-residue protein sequence, read N- to C-terminus: Protein-L-isoaspartate O-methyltransferase (216 aa).

Serine 66 is a catalytic residue.

The protein belongs to the methyltransferase superfamily. L-isoaspartyl/D-aspartyl protein methyltransferase family.

It localises to the cytoplasm. It catalyses the reaction [protein]-L-isoaspartate + S-adenosyl-L-methionine = [protein]-L-isoaspartate alpha-methyl ester + S-adenosyl-L-homocysteine. Catalyzes the methyl esterification of L-isoaspartyl residues in peptides and proteins that result from spontaneous decomposition of normal L-aspartyl and L-asparaginyl residues. It plays a role in the repair and/or degradation of damaged proteins. This is Protein-L-isoaspartate O-methyltransferase from Dechloromonas aromatica (strain RCB).